The following is a 381-amino-acid chain: Cytochrome b (381 aa).

Transmembrane regions (helical) follow at residues 34 to 54, 78 to 99, 114 to 134, and 179 to 199; these read FGSL…FLAM, WLIR…YFHI, WNIG…GYVL, and FFAF…IHIL. Residues histidine 84 and histidine 98 each contribute to the heme b site. Histidine 183 and histidine 197 together coordinate heme b. Histidine 202 contributes to the a ubiquinone binding site. 4 consecutive transmembrane segments (helical) span residues 227 to 247, 289 to 309, 321 to 341, and 348 to 368; these read YKDA…ALFL, LGGV…PFLH, LTQV…WIGG, and FILI…IAIP.

The protein belongs to the cytochrome b family. As to quaternary structure, the cytochrome bc1 complex contains 3 respiratory subunits (MT-CYB, CYC1 and UQCRFS1), 2 core proteins (UQCRC1 and UQCRC2) and probably 6 low-molecular weight proteins. The cofactor is heme b.

Its subcellular location is the mitochondrion inner membrane. Functionally, component of the ubiquinol-cytochrome c reductase complex (complex III or cytochrome b-c1 complex) that is part of the mitochondrial respiratory chain. The b-c1 complex mediates electron transfer from ubiquinol to cytochrome c. Contributes to the generation of a proton gradient across the mitochondrial membrane that is then used for ATP synthesis. The chain is Cytochrome b (mt-cyb) from Carcharodon carcharias (Great white shark).